Consider the following 202-residue polypeptide: uncharacterized protein (202 aa).

This is an uncharacterized protein from Bacillus anthracis.